The following is a 120-amino-acid chain: MIDFGNLKYENGLIIGIVQDRASKEVLMCAYMNREALEKTVETGIAHFWSRSRQKLWKKGETSGHLQKVKEIRIDCDMDSVLLLVEQVGGACHMGYRSCFYRNLDGEVVGEKVFEPEDVY.

Position 75 (Asp75) interacts with Mg(2+). Position 76 (Cys76) interacts with Zn(2+). Residues Asp77 and Asp79 each coordinate Mg(2+). Zn(2+)-binding residues include Cys92 and Cys99.

The protein belongs to the PRA-CH family. In terms of assembly, homodimer. It depends on Mg(2+) as a cofactor. Zn(2+) is required as a cofactor.

Its subcellular location is the cytoplasm. The catalysed reaction is 1-(5-phospho-beta-D-ribosyl)-5'-AMP + H2O = 1-(5-phospho-beta-D-ribosyl)-5-[(5-phospho-beta-D-ribosylamino)methylideneamino]imidazole-4-carboxamide. Its pathway is amino-acid biosynthesis; L-histidine biosynthesis; L-histidine from 5-phospho-alpha-D-ribose 1-diphosphate: step 3/9. Its function is as follows. Catalyzes the hydrolysis of the adenine ring of phosphoribosyl-AMP. In Methanosarcina mazei (strain ATCC BAA-159 / DSM 3647 / Goe1 / Go1 / JCM 11833 / OCM 88) (Methanosarcina frisia), this protein is Phosphoribosyl-AMP cyclohydrolase.